Reading from the N-terminus, the 686-residue chain is ATP-dependent zinc metalloprotease FTSH 6, chloroplastic (686 aa).

A compositionally biased stretch (polar residues) spans 1-14; sequence MSPTAMSLTTTTSR. Residues 1–52 are disordered; that stretch reads MSPTAMSLTTTTSRLPICRAQGGGVAKEKRTTPPPAKITPPSSSSSEAAGLS. The transit peptide at 1 to 75 directs the protein to the chloroplast; the sequence is MSPTAMSLTT…LGLTAARPAR (75 aa). A compositionally biased stretch (low complexity) spans 39–52; it reads TPPSSSSSEAAGLS. A helical membrane pass occupies residues 164-184; the sequence is VMLLDLLVNFGFPLLFVASLL. 261-268 lines the ATP pocket; the sequence is GPPGTGKT. Position 483 (histidine 483) interacts with Zn(2+). Glutamate 484 is a catalytic residue. Histidine 487 and aspartate 562 together coordinate Zn(2+).

It in the N-terminal section; belongs to the AAA ATPase family. In the C-terminal section; belongs to the peptidase M41 family. Zn(2+) is required as a cofactor.

It is found in the plastid. The protein resides in the chloroplast thylakoid membrane. Functionally, probable ATP-dependent zinc metallopeptidase. This is ATP-dependent zinc metalloprotease FTSH 6, chloroplastic (FTSH6) from Oryza sativa subsp. japonica (Rice).